A 217-amino-acid polypeptide reads, in one-letter code: Magnetosome protein MamA (217 aa).

TPR repeat units follow at residues Val-12 to Ile-44, Gln-46 to Asp-79, Val-80 to Asn-113, Val-114 to Asn-147, Phe-148 to Glu-181, and Gly-182 to Ala-215. The N-terminal domain (NTD) stretch occupies residues Asn-41–Asp-112. Residues Asn-113 to Val-217 are C-terminal domain (CTD).

Belongs to the magnetosome MamA family. Oligomerizes into high molecular weight complexes (at least 560 kDa). Forms round, 20 nm diameter complexes with a central cavity. Interacts with full-length Mms6. Probably binds MamC.

The protein resides in the magnetosome membrane. Its function is as follows. Probably forms a large homooligomer on which other magnetosome subunits assemble. Required for formation of functional magnetosomes from pre-existing vesicles, it has a dynamic location in the cell. The protein is Magnetosome protein MamA of Paramagnetospirillum magneticum (strain ATCC 700264 / AMB-1) (Magnetospirillum magneticum).